The following is a 93-amino-acid chain: Small ribosomal subunit protein uS19 (93 aa).

The segment at 73–93 (EFSPTRTFRGHVKDDRKSKRR) is disordered. The segment covering 83–93 (HVKDDRKSKRR) has biased composition (basic and acidic residues).

Belongs to the universal ribosomal protein uS19 family.

Functionally, protein S19 forms a complex with S13 that binds strongly to the 16S ribosomal RNA. The chain is Small ribosomal subunit protein uS19 from Streptomyces avermitilis (strain ATCC 31267 / DSM 46492 / JCM 5070 / NBRC 14893 / NCIMB 12804 / NRRL 8165 / MA-4680).